The chain runs to 294 residues: 4-hydroxy-tetrahydrodipicolinate synthase (294 aa).

Threonine 47 lines the pyruvate pocket. The active-site Proton donor/acceptor is tyrosine 135. The active-site Schiff-base intermediate with substrate is the lysine 163. Position 205 (isoleucine 205) interacts with pyruvate.

Belongs to the DapA family. In terms of assembly, homotetramer; dimer of dimers.

It localises to the cytoplasm. It carries out the reaction L-aspartate 4-semialdehyde + pyruvate = (2S,4S)-4-hydroxy-2,3,4,5-tetrahydrodipicolinate + H2O + H(+). Its pathway is amino-acid biosynthesis; L-lysine biosynthesis via DAP pathway; (S)-tetrahydrodipicolinate from L-aspartate: step 3/4. Its function is as follows. Catalyzes the condensation of (S)-aspartate-beta-semialdehyde [(S)-ASA] and pyruvate to 4-hydroxy-tetrahydrodipicolinate (HTPA). The sequence is that of 4-hydroxy-tetrahydrodipicolinate synthase from Rickettsia typhi (strain ATCC VR-144 / Wilmington).